The following is a 364-amino-acid chain: Uroporphyrinogen decarboxylase (364 aa).

Residues 28–32 (RQAGR), Asp-78, Tyr-160, Thr-215, and His-333 contribute to the substrate site.

This sequence belongs to the uroporphyrinogen decarboxylase family. Homodimer.

It localises to the cytoplasm. It catalyses the reaction uroporphyrinogen III + 4 H(+) = coproporphyrinogen III + 4 CO2. Its pathway is porphyrin-containing compound metabolism; protoporphyrin-IX biosynthesis; coproporphyrinogen-III from 5-aminolevulinate: step 4/4. Functionally, catalyzes the decarboxylation of four acetate groups of uroporphyrinogen-III to yield coproporphyrinogen-III. This is Uroporphyrinogen decarboxylase from Burkholderia pseudomallei (strain 1106a).